Here is a 175-residue protein sequence, read N- to C-terminus: Bcl-2-related protein A1 (175 aa).

The protein belongs to the Bcl-2 family. As to quaternary structure, interacts directly with BCL2L11/BIM, BAK1, BID, BMF and BBC3. Interacts directly with PMAIP1. Interacts with BOP. Interacts with ING4. Interacts with UBQLN4.

It localises to the cytoplasm. Functionally, retards apoptosis induced by IL-3 deprivation. May function in the response of hemopoietic cells to external signals and in maintaining endothelial survival during infection. Can inhibit apoptosis induced by serum starvation in the mammary epithelial cell line HC11. This chain is Bcl-2-related protein A1 (BCL2A1), found in Bos taurus (Bovine).